A 514-amino-acid polypeptide reads, in one-letter code: Peptide chain release factor 3 (514 aa).

The 261-residue stretch at 8–268 folds into the tr-type G domain; sequence KKRRTFAIIS…TFLEFAPEPH (261 aa). GTP is bound by residues 17–24, 85–89, and 139–142; these read SHPDAGKT, DTPGH, and NKLD.

Belongs to the TRAFAC class translation factor GTPase superfamily. Classic translation factor GTPase family. PrfC subfamily.

Its subcellular location is the cytoplasm. In terms of biological role, increases the formation of ribosomal termination complexes and stimulates activities of RF-1 and RF-2. It binds guanine nucleotides and has strong preference for UGA stop codons. It may interact directly with the ribosome. The stimulation of RF-1 and RF-2 is significantly reduced by GTP and GDP, but not by GMP. The protein is Peptide chain release factor 3 of Streptococcus pyogenes serotype M5 (strain Manfredo).